The sequence spans 630 residues: Neuronal acetylcholine receptor subunit alpha-4 (630 aa).

An N-terminal signal peptide occupies residues 1-30 (MANSGTGAPPPLLLLPLLLLLGTGLLPASS). Topologically, residues 32 to 249 (IETRAHAEER…IIRRLPLFYT (218 aa)) are extracellular. An N-linked (GlcNAc...) asparagine glycan is attached at Asn59. 2 residues coordinate Ca(2+): Val78 and Glu80. N-linked (GlcNAc...) asparagine glycans are attached at residues Asn109 and Asn176. Intrachain disulfides connect Cys163–Cys177 and Cys227–Cys228. A helical transmembrane segment spans residues 250-270 (INLIIPCLLISCLTVLVFYLP). Cys273 carries S-palmitoyl cysteine lipidation. 2 consecutive transmembrane segments (helical) span residues 279 to 299 (LCIS…EIIP) and 313 to 333 (LLFT…VLNV). The Cytoplasmic segment spans residues 334 to 604 (HHRSPRTHTM…WKYVAMVIDR (271 aa)). Disordered stretches follow at residues 418–463 (TAVE…SGAP) and 505–526 (SLAD…SQLP). Ser428 carries the post-translational modification Phosphoserine. Basic and acidic residues predominate over residues 434–443 (PDLKTSEVEK). The span at 447–457 (CPSPGSCPPPK) shows a compositional bias: pro residues. Phosphoserine is present on residues Ser542 and Ser545. A helical membrane pass occupies residues 605–625 (IFLWMFIIVCLLGTVGLFLPP).

Belongs to the ligand-gated ion channel (TC 1.A.9) family. Acetylcholine receptor (TC 1.A.9.1) subfamily. Alpha-4/CHRNA4 sub-subfamily. In terms of assembly, neuronal AChR is composed of two different types of subunits: alpha and beta. CHRNA4 forms heteropentameric neuronal acetylcholine receptors with CHRNB2 and CHRNB4, as well as CHRNA5 and CHRNB3 as accesory subunits. Found in two major stoichiometric forms, LS (low agonist sensitivity): (CHRNA4)3:(CHRNB2)2 and HS (high agonist sensitivity): (CHRNA4)2:(CHRNB2)3, the two stoichiometric forms differ in their unitary conductance, calcium permeability, ACh sensitivity and potentiation by divalent cation. Cells produce predominantly an (CHRNA4)3:(CHRNB2)2 nAChR. The (CHRNA4)2:(CHRNB2)3 expression is selectively up-regulated by nicotine and has lower single channel conductance and calcium permeability. In the striatum, also forms CHRNA4:CHRNA6:CHRNB2 complexes. Also found in the stoichiometric form: (CHRNA4:CHRNB2)2:CHRNB3. Interacts with RIC3; which is required for proper folding and assembly. Interacts with LYPD6. As to expression, in various regions of the central nervous system. Expressed in hippocampal neurons.

The protein resides in the presynaptic cell membrane. It localises to the cell membrane. The enzyme catalyses Ca(2+)(in) = Ca(2+)(out). It carries out the reaction K(+)(in) = K(+)(out). The catalysed reaction is Na(+)(in) = Na(+)(out). Activated by a myriad of ligands such as acetylcholine, cytisine, nicotine, choline and epibatidine. Channel potentiation by calcium is stoichiometry-selective, CHRNA4:CHRNB2 nACh receptor is achieved by calcium association with topographically distinct sites framed by anionic residues within the CHRNA4 subunit and between the CHRNA4 and CHRNB2 subunits. nAChR activity is inhibited by the antagonist alpha-conotoxins BuIA, PnIA, GID and MII, small disulfide-constrained peptides from cone snails. Component of neuronal acetylcholine receptors (nAChRs) that function as pentameric, ligand-gated cation channels with high calcium permeability among other activities. nAChRs are excitatory neurotrasnmitter receptors formed by a collection of nAChR subunits known to mediate synaptic transmission in the nervous system and the neuromuscular junction. Each nAchR subunit confers differential attributes to channel properties, including activation, deactivation and desensitization kinetics, pH sensitivity, cation permeability, and binding to allosteric modulators. CHRNA4 forms heteropentameric neuronal acetylcholine receptors with CHRNB2 and CHRNB4, as well as CHRNA5 and CHRNB3 as accesory subunits. Is the most abundant nAChR subtype expressed in the central nervous system. Found in two major stoichiometric forms,(CHRNA4)3:(CHRNB2)2 and (CHRNA4)2:(CHRNB2)3, the two stoichiometric forms differ in their unitary conductance, calcium permeability, ACh sensitivity and potentiation by divalent cation. Involved in the modulation of calcium-dependent signaling pathways, influences the release of neurotransmitters, including dopamine, glutamate and GABA. In Rattus norvegicus (Rat), this protein is Neuronal acetylcholine receptor subunit alpha-4 (Chrna4).